The following is a 597-amino-acid chain: tRNA uridine 5-carboxymethylaminomethyl modification enzyme MnmG (597 aa).

10 to 15 (GGGHAG) lines the FAD pocket. NAD(+) is bound at residue 267–281 (GPRYCPSIEDKVVRF).

This sequence belongs to the MnmG family. Homodimer. Heterotetramer of two MnmE and two MnmG subunits. Requires FAD as cofactor.

Its subcellular location is the cytoplasm. NAD-binding protein involved in the addition of a carboxymethylaminomethyl (cmnm) group at the wobble position (U34) of certain tRNAs, forming tRNA-cmnm(5)s(2)U34. This is tRNA uridine 5-carboxymethylaminomethyl modification enzyme MnmG from Thermus thermophilus (strain ATCC BAA-163 / DSM 7039 / HB27).